Consider the following 936-residue polypeptide: Protein translocase subunit SecA (936 aa).

ATP contacts are provided by residues Q87, 105-109, and D515; that span reads GEGKT. Positions 920, 922, 931, and 932 each coordinate Zn(2+).

Belongs to the SecA family. As to quaternary structure, monomer and homodimer. Part of the essential Sec protein translocation apparatus which comprises SecA, SecYEG and auxiliary proteins SecDF-YajC and YidC. The cofactor is Zn(2+).

The protein localises to the cell inner membrane. The protein resides in the cytoplasm. It catalyses the reaction ATP + H2O + cellular proteinSide 1 = ADP + phosphate + cellular proteinSide 2.. Functionally, part of the Sec protein translocase complex. Interacts with the SecYEG preprotein conducting channel. Has a central role in coupling the hydrolysis of ATP to the transfer of proteins into and across the cell membrane, serving both as a receptor for the preprotein-SecB complex and as an ATP-driven molecular motor driving the stepwise translocation of polypeptide chains across the membrane. The chain is Protein translocase subunit SecA from Paraburkholderia phytofirmans (strain DSM 17436 / LMG 22146 / PsJN) (Burkholderia phytofirmans).